Reading from the N-terminus, the 147-residue chain is Large ribosomal subunit protein uL15 (147 aa).

Residues 1–45 are disordered; sequence MTIKLHHLRPAPGAKSDKIRVGRGEGGKRGKTAGRGTKGTKARKN. Residues 15-28 are compositionally biased toward basic and acidic residues; that stretch reads KSDKIRVGRGEGGK.

The protein belongs to the universal ribosomal protein uL15 family. As to quaternary structure, part of the 50S ribosomal subunit.

In terms of biological role, binds to the 23S rRNA. The sequence is that of Large ribosomal subunit protein uL15 from Rhodococcus jostii (strain RHA1).